The primary structure comprises 327 residues: D-alanine--D-alanine ligase (327 aa).

Positions 113–312 (KRLWMTHGLA…YEDFVLQVLA (200 aa)) constitute an ATP-grasp domain. 139–194 (VADLGLPLIVKPAREGSSIGLTKVTAADQMRAAFDKAAALDNDVIAETFVDGAELT) contacts ATP. Residues aspartate 266, glutamate 279, and asparagine 281 each coordinate Mg(2+).

It belongs to the D-alanine--D-alanine ligase family. Requires Mg(2+) as cofactor. Mn(2+) serves as cofactor.

It localises to the cytoplasm. It catalyses the reaction 2 D-alanine + ATP = D-alanyl-D-alanine + ADP + phosphate + H(+). It functions in the pathway cell wall biogenesis; peptidoglycan biosynthesis. In terms of biological role, cell wall formation. This is D-alanine--D-alanine ligase from Cupriavidus taiwanensis (strain DSM 17343 / BCRC 17206 / CCUG 44338 / CIP 107171 / LMG 19424 / R1) (Ralstonia taiwanensis (strain LMG 19424)).